Reading from the N-terminus, the 404-residue chain is Coenzyme F420H(2) oxidase (404 aa).

7 residues coordinate Fe cation: His-84, Glu-86, Asp-88, His-89, His-152, Asp-170, and His-233. In terms of domain architecture, Flavodoxin-like spans 259–399; it reads VTVIYDTMHH…ACFEAGRRLA (141 aa). Residues 265–270, 317–320, and 351–356 contribute to the FMN site; these read TMHHST, AIYD, and SMGGRG.

This sequence in the N-terminal section; belongs to the zinc metallo-hydrolase group 3 family. FMN serves as cofactor. It depends on Fe cation as a cofactor.

It carries out the reaction 2 reduced coenzyme F420-(gamma-L-Glu)(n) + O2 = 2 oxidized coenzyme F420-(gamma-L-Glu)(n) + 2 H2O + 2 H(+). Its function is as follows. Catalyzes the oxidation of F420H(2) with O(2). May be involved in O(2) detoxification, reducing the intracellular O(2) concentration to a level allowing growth at the expense of methane formation. The sequence is that of Coenzyme F420H(2) oxidase from Methanothermobacter thermautotrophicus (strain ATCC 29096 / DSM 1053 / JCM 10044 / NBRC 100330 / Delta H) (Methanobacterium thermoautotrophicum).